The chain runs to 313 residues: 2-phosphoglycerate kinase (313 aa).

One can recognise an ATP-cone domain in the interval 8-95; that stretch reads NKILVKDKDY…LWRRVLKKHS (88 aa).

The protein belongs to the 2-phosphoglycerate kinase family. A divalent metal cation is required as a cofactor.

The enzyme catalyses (2R)-2-phosphoglycerate + ATP = (2R)-2,3-bisphosphoglycerate + ADP + H(+). Its pathway is thermoadapter biosynthesis; cyclic 2,3-diphosphoglycerate biosynthesis; cyclic 2,3-diphosphoglycerate from 2-phospho-D-glycerate: step 1/2. Catalyzes the phosphorylation of 2-phosphoglycerate to 2,3-diphosphoglycerate. Involved in the biosynthesis of cyclic 2,3-bisphosphoglycerate, a thermoprotectant. The chain is 2-phosphoglycerate kinase from Methanococcus vannielii (strain ATCC 35089 / DSM 1224 / JCM 13029 / OCM 148 / SB).